Reading from the N-terminus, the 343-residue chain is MMFLLPFLTVFLAKQSHTRTHSLRYFRLAISDPGPGVPEFISVGYVDSHPITTYDSVTRQKEPRAPWMAENLAPDHWERYTQLLRGWQRTFQTELRHLQRHYNHSGLHTYQRMIGCELLEDGSTTGFLQYAYDGQDFIVFDKDTLSWLAMDNVAHITKRAWEANLHELQYQKNWLEEECIAWLKRFLEYGSDALERTEHPVVRTTRKETFPGITTLFCRAHGFYPPEISMIWKKNGEEIVQEVDYGGVLPSGDGTYQMWVSVDLDPQTKDIYSCHVEHCGLQMVLEAPQESGNTLLVANTISGTIILIIVLAGVGALIWRRRSREPKEVMYQPTQVNEGSSPS.

An N-terminal signal peptide occupies residues 1–18 (MMFLLPFLTVFLAKQSHT). The alpha-1 stretch occupies residues 19 to 105 (RTHSLRYFRL…RHLQRHYNHS (87 aa)). The antigen-binding cleft stretch occupies residues 19-197 (RTHSLRYFRL…EYGSDALERT (179 aa)). At 19–298 (RTHSLRYFRL…QESGNTLLVA (280 aa)) the chain is on the extracellular side. 8-(9H-purin-6-yl)-2-oxa-8-azabicyclo[3.3.1]nona-3,6-diene-4,6-dicarbaldehyde contacts are provided by tyrosine 25 and arginine 27. Positions 27, 42, and 61 each coordinate 5-(2-oxoethylideneamino)-6-(D-ribitylamino)uracil. Residues arginine 27, serine 42, and lysine 61 each coordinate 5-(2-oxopropylideneamino)-6-(D-ribitylamino)uracil. Positions 27, 42, and 61 each coordinate 7-hydroxy-6-methyl-8-(1-D-ribityl)lumazine. Lysine 61 and histidine 76 together coordinate 8-(9H-purin-6-yl)-2-oxa-8-azabicyclo[3.3.1]nona-3,6-diene-4,6-dicarbaldehyde. Lysine 61 provides a ligand contact to 2-amino-4-oxopteridine-6-carbaldehyde. Lysine 61 provides a ligand contact to pyridoxal. N-linked (GlcNAc...) asparagine glycosylation is present at asparagine 103. Residues 106–197 (GLHTYQRMIG…EYGSDALERT (92 aa)) form an alpha-2 region. Arginine 112 provides a ligand contact to 8-(9H-purin-6-yl)-2-oxa-8-azabicyclo[3.3.1]nona-3,6-diene-4,6-dicarbaldehyde. 5-(2-oxoethylideneamino)-6-(D-ribitylamino)uracil is bound by residues arginine 112, tyrosine 170, and glutamine 171. 5-(2-oxopropylideneamino)-6-(D-ribitylamino)uracil is bound by residues arginine 112, tyrosine 170, and glutamine 171. 7-hydroxy-6-methyl-8-(1-D-ribityl)lumazine-binding residues include arginine 112, tyrosine 170, and glutamine 171. Disulfide bonds link cysteine 116/cysteine 179 and cysteine 218/cysteine 274. The alpha-3 stretch occupies residues 198–289 (EHPVVRTTRK…GLQMVLEAPQ (92 aa)). The 103-residue stretch at 200–302 (PVVRTTRKET…NTLLVANTIS (103 aa)) folds into the Ig-like C1-type domain. Residues 290–298 (ESGNTLLVA) form a connecting peptide region. A helical membrane pass occupies residues 299–319 (NTISGTIILIIVLAGVGALIW). Over 320–343 (RRRSREPKEVMYQPTQVNEGSSPS) the chain is Cytoplasmic.

As to quaternary structure, heterotrimer that consists of MR1, B2M and metabolite antigen. Major classes of metabolite ligands presented by MR1 include riboflavin-related antigens, pyrimidines and ribityl lumazines, nucleobase adducts and folate derivatives. Forms reversible covalent Schiff base complexes with microbial pyrimidine-based metabolite, which serves as a molecular switch triggering complete folding, stable association with B2M and translocation of the ternary complex from endoplasmic reticulum to the plasma membrane. Alternatively, forms non-Schiff base complexes with ribityl lumazines. On antigen-presenting cells, the ternary complex interacts with TCR on MR1-restricted T cells. Interacts with TAPBP and TAPBPL chaperones in the endoplasmic reticulum. TAPBP associated or not with MHC class I peptide loading complex binds ligand-free MR1 or MR1-B2M complex, providing for stable MR1 pools ready for metabolite antigen processing. TAPBPL interacts with MR1 in a ligand-independent way; this interaction may stabilize MR1 pool and facilitate ligand loading and dissociation. Structurally, MR1-B2M heterodimer adopts a topology similar to classical MHC class I molecules, with alpha-1 and alpha-2 domains of MR1 forming the antigen-binding cleft composed of two alpha-helices resting on a floor of 7-stranded anti-parallel beta-pleated sheet. MR1-B2M heterodimer (via alpha-helices) interacts with TCR (via CDR domains). Post-translationally, N-glycosylated. In terms of tissue distribution, expressed in kidney, liver, testis, spleen, thymus, brain, and heart.

The protein resides in the cell membrane. It localises to the endoplasmic reticulum membrane. The protein localises to the golgi apparatus membrane. Its subcellular location is the early endosome membrane. It is found in the late endosome membrane. In terms of biological role, antigen-presenting molecule specialized in displaying microbial pyrimidine-based metabolites to alpha-beta T cell receptors (TCR) on innate-type mucosal-associated invariant T (MAIT) cells. In complex with B2M preferentially presents riboflavin-derived metabolites to semi-invariant TCRs on MAIT cells, guiding immune surveillance of the microbial metabolome at mucosal epithelial barriers. Signature pyrimidine-based microbial antigens are generated via non-enzymatic condensation of metabolite intermediates of the riboflavin pathway with by-products arising from other metabolic pathways such as glycolysis. Typical potent antigenic metabolites are 5-(2-oxoethylideneamino)-6-D-ribitylaminouracil (5-OE-RU) and 5-(2-oxopropylideneamino)-6-D-ribitylaminouracil (5-OP-RU), products of condensation of 5-amino-6-D-ribityaminouracil (5-A-RU) with glyoxal or methylglyoxal by-products, respectively. May present microbial antigens to various MAIT cell subsets, providing for unique recognition of diverse microbes, including pathogens that do not synthesize riboflavin. Upon antigen recognition, elicits rapid innate-type MAIT cell activation to eliminate pathogenic microbes by directly killing infected cells. During T cell development, drives thymic selection and post-thymic terminal differentiation of MAIT cells in a process dependent on commensal microflora. Acts as an immune sensor of cancer cell metabolome. May present a tumor-specific or -associated metabolite essential for cancer cell survival to a pan-cancer TCR on a non-MAIT CD8-positive T cell clone, triggering T cell-mediated killing of a wide range of cancer cell types. May present tumor-enriched pyridoxal and pyridoxal 5'-phosphate antigens, enabling preferential recognition of cancer cells. Presents nucleobase carbonyl adducts generated during oxidative stress. Captures M3Ade, a nucleobase adduct composed of one adenine modified by a malondialdehyde trimer, for recognition by MR1-restricted T cell clones expressing a polyclonal TCR repertoire. The chain is Major histocompatibility complex class I-related protein 1 from Rattus norvegicus (Rat).